The primary structure comprises 115 residues: Large ribosomal subunit protein bL19 (115 aa).

Belongs to the bacterial ribosomal protein bL19 family.

In terms of biological role, this protein is located at the 30S-50S ribosomal subunit interface and may play a role in the structure and function of the aminoacyl-tRNA binding site. The polypeptide is Large ribosomal subunit protein bL19 (Syntrophotalea carbinolica (strain DSM 2380 / NBRC 103641 / GraBd1) (Pelobacter carbinolicus)).